The chain runs to 272 residues: L-aspartate dehydrogenase 3 (272 aa).

The NAD(+) site is built by Ala-126 and Asn-194. His-224 is an active-site residue.

Belongs to the L-aspartate dehydrogenase family.

It catalyses the reaction L-aspartate + NADP(+) + H2O = oxaloacetate + NH4(+) + NADPH + H(+). The catalysed reaction is L-aspartate + NAD(+) + H2O = oxaloacetate + NH4(+) + NADH + H(+). Its pathway is cofactor biosynthesis; NAD(+) biosynthesis; iminoaspartate from L-aspartate (dehydrogenase route): step 1/1. Its function is as follows. Specifically catalyzes the NAD or NADP-dependent dehydrogenation of L-aspartate to iminoaspartate. The sequence is that of L-aspartate dehydrogenase 3 from Bordetella bronchiseptica (strain ATCC BAA-588 / NCTC 13252 / RB50) (Alcaligenes bronchisepticus).